We begin with the raw amino-acid sequence, 562 residues long: Dihydroxy-acid dehydratase (562 aa).

Cys-55 is a binding site for [2Fe-2S] cluster. A Mg(2+)-binding site is contributed by Asp-87. Cys-128 is a [2Fe-2S] cluster binding site. Residues Asp-129 and Lys-130 each contribute to the Mg(2+) site. Lys-130 is modified (N6-carboxylysine). Residue Cys-200 participates in [2Fe-2S] cluster binding. Residue Glu-451 participates in Mg(2+) binding. The active-site Proton acceptor is Ser-477.

This sequence belongs to the IlvD/Edd family. Homodimer. The cofactor is [2Fe-2S] cluster. Mg(2+) is required as a cofactor.

It catalyses the reaction (2R)-2,3-dihydroxy-3-methylbutanoate = 3-methyl-2-oxobutanoate + H2O. The enzyme catalyses (2R,3R)-2,3-dihydroxy-3-methylpentanoate = (S)-3-methyl-2-oxopentanoate + H2O. The protein operates within amino-acid biosynthesis; L-isoleucine biosynthesis; L-isoleucine from 2-oxobutanoate: step 3/4. It participates in amino-acid biosynthesis; L-valine biosynthesis; L-valine from pyruvate: step 3/4. Its function is as follows. Functions in the biosynthesis of branched-chain amino acids. Catalyzes the dehydration of (2R,3R)-2,3-dihydroxy-3-methylpentanoate (2,3-dihydroxy-3-methylvalerate) into 2-oxo-3-methylpentanoate (2-oxo-3-methylvalerate) and of (2R)-2,3-dihydroxy-3-methylbutanoate (2,3-dihydroxyisovalerate) into 2-oxo-3-methylbutanoate (2-oxoisovalerate), the penultimate precursor to L-isoleucine and L-valine, respectively. This is Dihydroxy-acid dehydratase from Cytophaga hutchinsonii (strain ATCC 33406 / DSM 1761 / CIP 103989 / NBRC 15051 / NCIMB 9469 / D465).